Reading from the N-terminus, the 386-residue chain is Short-chain dehydrogenase/reductase family 42E member 1 (386 aa).

The active-site Proton acceptor is the Y150. K154 contacts NAD(+). 2 helical membrane passes run 279-299 (FPLSLVYFFAFLTEWIHFFIS) and 363-383 (YLIWDIIFILLVTVVLLSWLP).

It belongs to the 3-beta-HSD family.

The protein localises to the membrane. The polypeptide is Short-chain dehydrogenase/reductase family 42E member 1 (sdr42e1) (Xenopus laevis (African clawed frog)).